The primary structure comprises 278 residues: uncharacterized protein (278 aa).

The segment at 251-278 (TLSENKKQKSSSTSPETDSDMSEFFGDN) is disordered.

This is an uncharacterized protein from Aedes pseudoscutellaris reovirus (isolate France) (ApRV).